Consider the following 464-residue polypeptide: L-cysteine:1D-myo-inositol 2-amino-2-deoxy-alpha-D-glucopyranoside ligase (464 aa).

Cysteine 67 is a binding site for Zn(2+). L-cysteinyl-5'-AMP contacts are provided by residues 67–70 (CGIT), threonine 82, and 105–107 (NVT). The 'HIGH' region motif lies at 69-79 (ITPYDATHLGH). Positions 207 to 212 (ERGGDP) match the 'ERGGDP' region motif. Tryptophan 247 contacts L-cysteinyl-5'-AMP. Residue cysteine 251 participates in Zn(2+) binding. Residue 269 to 271 (GTD) participates in L-cysteinyl-5'-AMP binding. Zn(2+) is bound at residue histidine 276. Valine 303 is a binding site for L-cysteinyl-5'-AMP. A 'KMSKS' region motif is present at residues 309 to 313 (KMSKS). The interval 410–435 (AGGSAGAGPDPTHQGGPVRGSGGDVP) is disordered.

Belongs to the class-I aminoacyl-tRNA synthetase family. MshC subfamily. As to quaternary structure, monomer. It depends on Zn(2+) as a cofactor.

It carries out the reaction 1D-myo-inositol 2-amino-2-deoxy-alpha-D-glucopyranoside + L-cysteine + ATP = 1D-myo-inositol 2-(L-cysteinylamino)-2-deoxy-alpha-D-glucopyranoside + AMP + diphosphate + H(+). Functionally, catalyzes the ATP-dependent condensation of GlcN-Ins and L-cysteine to form L-Cys-GlcN-Ins. This is L-cysteine:1D-myo-inositol 2-amino-2-deoxy-alpha-D-glucopyranoside ligase from Frankia casuarinae (strain DSM 45818 / CECT 9043 / HFP020203 / CcI3).